Here is a 476-residue protein sequence, read N- to C-terminus: 3-isopropylmalate dehydratase large subunit (476 aa).

[4Fe-4S] cluster contacts are provided by cysteine 353, cysteine 413, and cysteine 416.

This sequence belongs to the aconitase/IPM isomerase family. LeuC type 1 subfamily. In terms of assembly, heterodimer of LeuC and LeuD. The cofactor is [4Fe-4S] cluster.

The enzyme catalyses (2R,3S)-3-isopropylmalate = (2S)-2-isopropylmalate. It participates in amino-acid biosynthesis; L-leucine biosynthesis; L-leucine from 3-methyl-2-oxobutanoate: step 2/4. Its function is as follows. Catalyzes the isomerization between 2-isopropylmalate and 3-isopropylmalate, via the formation of 2-isopropylmaleate. The polypeptide is 3-isopropylmalate dehydratase large subunit (Yersinia enterocolitica serotype O:8 / biotype 1B (strain NCTC 13174 / 8081)).